Reading from the N-terminus, the 310-residue chain is Ribosomal RNA small subunit methyltransferase H (310 aa).

S-adenosyl-L-methionine is bound by residues 33-35 (GGH), Asp52, Phe79, Asp98, and Gln105.

The protein belongs to the methyltransferase superfamily. RsmH family.

The protein resides in the cytoplasm. The enzyme catalyses cytidine(1402) in 16S rRNA + S-adenosyl-L-methionine = N(4)-methylcytidine(1402) in 16S rRNA + S-adenosyl-L-homocysteine + H(+). Its function is as follows. Specifically methylates the N4 position of cytidine in position 1402 (C1402) of 16S rRNA. The protein is Ribosomal RNA small subunit methyltransferase H of Campylobacter jejuni subsp. jejuni serotype O:23/36 (strain 81-176).